Reading from the N-terminus, the 335-residue chain is UPF0353 protein NFA_34780 (335 aa).

2 helical membrane passes run 8–28 (ALIW…YVLV) and 61–81 (IALM…PTSV). One can recognise a VWFA domain in the interval 90 to 295 (TVVLVMDVSL…EELTAVYDTL (206 aa)). A helical membrane pass occupies residues 310–330 (RPWLLLGMLVVAAGIVTGLLY).

This sequence belongs to the UPF0353 family.

The protein resides in the cell membrane. This is UPF0353 protein NFA_34780 from Nocardia farcinica (strain IFM 10152).